Reading from the N-terminus, the 534-residue chain is CTP synthase (534 aa).

The tract at residues 1 to 267 (MTKYIFVTGG…DQIVCDHLKL (267 aa)) is amidoligase domain. Ser13 contributes to the CTP binding site. Ser13 is a UTP binding site. 14-19 (SIGKGI) contacts ATP. Residue Tyr54 coordinates L-glutamine. Asp71 is a binding site for ATP. Positions 71 and 141 each coordinate Mg(2+). Residues 148–150 (DIE), 188–193 (KTKPTQ), and Lys224 each bind CTP. Residues 188–193 (KTKPTQ) and Lys224 contribute to the UTP site. 240-242 (RDV) contacts ATP. In terms of domain architecture, Glutamine amidotransferase type-1 spans 292-534 (KIALVGKYVE…FVTAAIKNSN (243 aa)). L-glutamine is bound at residue Gly354. The active-site Nucleophile; for glutamine hydrolysis is the Cys381. L-glutamine is bound by residues 382-385 (LGMQ), Glu405, and Arg463. Residues His508 and Glu510 contribute to the active site.

Belongs to the CTP synthase family. In terms of assembly, homotetramer.

It catalyses the reaction UTP + L-glutamine + ATP + H2O = CTP + L-glutamate + ADP + phosphate + 2 H(+). The enzyme catalyses L-glutamine + H2O = L-glutamate + NH4(+). The catalysed reaction is UTP + NH4(+) + ATP = CTP + ADP + phosphate + 2 H(+). It participates in pyrimidine metabolism; CTP biosynthesis via de novo pathway; CTP from UDP: step 2/2. With respect to regulation, allosterically activated by GTP, when glutamine is the substrate; GTP has no effect on the reaction when ammonia is the substrate. The allosteric effector GTP functions by stabilizing the protein conformation that binds the tetrahedral intermediate(s) formed during glutamine hydrolysis. Inhibited by the product CTP, via allosteric rather than competitive inhibition. Its function is as follows. Catalyzes the ATP-dependent amination of UTP to CTP with either L-glutamine or ammonia as the source of nitrogen. Regulates intracellular CTP levels through interactions with the four ribonucleotide triphosphates. The polypeptide is CTP synthase (Streptococcus pyogenes serotype M2 (strain MGAS10270)).